The sequence spans 93 residues: Co-chaperonin GroES (93 aa).

The protein belongs to the GroES chaperonin family. As to quaternary structure, heptamer of 7 subunits arranged in a ring. Interacts with the chaperonin GroEL.

The protein resides in the cytoplasm. Functionally, together with the chaperonin GroEL, plays an essential role in assisting protein folding. The GroEL-GroES system forms a nano-cage that allows encapsulation of the non-native substrate proteins and provides a physical environment optimized to promote and accelerate protein folding. GroES binds to the apical surface of the GroEL ring, thereby capping the opening of the GroEL channel. This chain is Co-chaperonin GroES, found in Streptococcus gordonii.